A 23-amino-acid polypeptide reads, in one-letter code: Fimbrial protein (23 aa).

A disulfide bridge connects residues cysteine 8 and cysteine 21.

Belongs to the N-Me-Phe pilin family. In terms of assembly, the pili are polar flexible filaments of about 5.4 nanometers diameter and 2.5 micrometers average length; they consist of only a single polypeptide chain arranged in a helical configuration of five subunits per turn in the assembled pilus.

The protein localises to the fimbrium. In Pseudomonas aeruginosa, this protein is Fimbrial protein (pil).